We begin with the raw amino-acid sequence, 96 residues long: Co-chaperonin GroES (96 aa).

It belongs to the GroES chaperonin family. In terms of assembly, heptamer of 7 subunits arranged in a ring. Interacts with the chaperonin GroEL.

The protein localises to the cytoplasm. Together with the chaperonin GroEL, plays an essential role in assisting protein folding. The GroEL-GroES system forms a nano-cage that allows encapsulation of the non-native substrate proteins and provides a physical environment optimized to promote and accelerate protein folding. GroES binds to the apical surface of the GroEL ring, thereby capping the opening of the GroEL channel. The polypeptide is Co-chaperonin GroES (Aliivibrio fischeri (strain ATCC 700601 / ES114) (Vibrio fischeri)).